We begin with the raw amino-acid sequence, 375 residues long: Carbamoyl phosphate synthase small chain (375 aa).

Positions 1-186 are CPSase; sequence MKAILALEDG…IVDGTYAWPG (186 aa). Ser45, Gly238, and Gly240 together coordinate L-glutamine. Residues 190 to 375 form the Glutamine amidotransferase type-1 domain; sequence RLVVFDMGIK…RNLVRKETGK (186 aa). Cys265 functions as the Nucleophile in the catalytic mechanism. L-glutamine contacts are provided by Leu266, Gln269, Asn307, Gly309, and Phe310. Active-site residues include His348 and Glu350.

This sequence belongs to the CarA family. In terms of assembly, composed of two chains; the small (or glutamine) chain promotes the hydrolysis of glutamine to ammonia, which is used by the large (or ammonia) chain to synthesize carbamoyl phosphate. Tetramer of heterodimers (alpha,beta)4.

The enzyme catalyses hydrogencarbonate + L-glutamine + 2 ATP + H2O = carbamoyl phosphate + L-glutamate + 2 ADP + phosphate + 2 H(+). The catalysed reaction is L-glutamine + H2O = L-glutamate + NH4(+). Its pathway is amino-acid biosynthesis; L-arginine biosynthesis; carbamoyl phosphate from bicarbonate: step 1/1. It participates in pyrimidine metabolism; UMP biosynthesis via de novo pathway; (S)-dihydroorotate from bicarbonate: step 1/3. Small subunit of the glutamine-dependent carbamoyl phosphate synthetase (CPSase). CPSase catalyzes the formation of carbamoyl phosphate from the ammonia moiety of glutamine, carbonate, and phosphate donated by ATP, constituting the first step of 2 biosynthetic pathways, one leading to arginine and/or urea and the other to pyrimidine nucleotides. The small subunit (glutamine amidotransferase) binds and cleaves glutamine to supply the large subunit with the substrate ammonia. This chain is Carbamoyl phosphate synthase small chain, found in Solidesulfovibrio magneticus (strain ATCC 700980 / DSM 13731 / RS-1) (Desulfovibrio magneticus).